Reading from the N-terminus, the 460-residue chain is Ammonium transporter Rh type C (460 aa).

The Cytoplasmic portion of the chain corresponds to M1–W9. Residues R10–V30 form a helical membrane-spanning segment. Over R31–Y61 the chain is Extracellular. N-linked (GlcNAc...) asparagine glycosylation is present at N48. Residues P62–L82 form a helical membrane-spanning segment. Residues Q83–S89 are Cytoplasmic-facing. Residues V90–W110 form a helical membrane-spanning segment. Residues L111–N125 lie on the Extracellular side of the membrane. A helical transmembrane segment spans residues L126–G145. Residues K146–Q151 are Cytoplasmic-facing. A helical membrane pass occupies residues L152 to L174. Residues E175–S179 lie on the Extracellular side of the membrane. A helical transmembrane segment spans residues G180 to L200. At Y201–D219 the chain is on the cytoplasmic side. Residues L220–I240 traverse the membrane as a helical segment. At S241 to A251 the chain is on the extracellular side. The helical transmembrane segment at I252 to L272 threads the bilayer. At H273–N285 the chain is on the cytoplasmic side. Residues A286–L303 traverse the membrane as a helical segment. Over P304–G306 the chain is Extracellular. The helical transmembrane segment at S307–L329 threads the bilayer. Residues E330–G346 are Cytoplasmic-facing. Residues I347–L367 traverse the membrane as a helical segment. Residues Y368–A396 are Extracellular-facing. Residues A397 to L417 traverse the membrane as a helical segment. At R418–P460 the chain is on the cytoplasmic side.

It belongs to the ammonium transporter (TC 2.A.49) family. Rh subfamily. Homotrimer. In terms of processing, N-glycosylated.

It is found in the apical cell membrane. The catalysed reaction is NH4(+)(in) = NH4(+)(out). The enzyme catalyses methylamine(out) = methylamine(in). It catalyses the reaction CO2(out) = CO2(in). Its function is as follows. Ammonium transporter involved in the maintenance of acid-base homeostasis. Transports ammonium and its related derivative methylammonium across the plasma membrane of epithelial cells likely contributing to renal transepithelial ammonia transport and ammonia metabolism. Postulated to primarily mediate an electroneutral bidirectional transport of NH3 ammonia species according to a mechanism that implies interaction of an NH4(+) ion with acidic residues of the pore entry followed by dissociation of NH4(+) into NH3 and H(+). As a result NH3 transits through the central pore and is protonated on the extracellular side reforming NH4(+). May act as a CO2 channel providing for renal acid secretion. The protein is Ammonium transporter Rh type C (RHCG) of Bos taurus (Bovine).